The primary structure comprises 504 residues: Glutamate--tRNA ligase (504 aa).

The 'HIGH' region signature appears at 9-19; the sequence is PSPTGDPHVGT. The short motif at 248 to 252 is the 'KMSKS' region element; that stretch reads KISKR. An ATP-binding site is contributed by Lys-251.

Belongs to the class-I aminoacyl-tRNA synthetase family. Glutamate--tRNA ligase type 1 subfamily. Monomer.

It is found in the cytoplasm. It carries out the reaction tRNA(Glu) + L-glutamate + ATP = L-glutamyl-tRNA(Glu) + AMP + diphosphate. Catalyzes the attachment of glutamate to tRNA(Glu) in a two-step reaction: glutamate is first activated by ATP to form Glu-AMP and then transferred to the acceptor end of tRNA(Glu). The protein is Glutamate--tRNA ligase of Acidothermus cellulolyticus (strain ATCC 43068 / DSM 8971 / 11B).